The sequence spans 86 residues: Large ribosomal subunit protein eL43 (86 aa).

Zn(2+) contacts are provided by Cys-40, Cys-43, Cys-58, and Cys-61. The C4-type zinc finger occupies 40-61 (CPFCRSKAVIREAYGIYRCKKC).

The protein belongs to the eukaryotic ribosomal protein eL43 family. Putative zinc-binding subfamily. Part of the 50S ribosomal subunit. Zn(2+) serves as cofactor.

Functionally, binds to the 23S rRNA. This chain is Large ribosomal subunit protein eL43, found in Nanoarchaeum equitans (strain Kin4-M).